A 494-amino-acid polypeptide reads, in one-letter code: Maintenance of mitochondrial morphology protein 1 (494 aa).

Residues 1 to 22 (MSSQPGDPATLPAQSSLSFTQG) are Lumenal-facing. Residues 23 to 43 (FLLGQLSVVLVLAAFIKFFIF) form a helical membrane-spanning segment. Topologically, residues 44–494 (GEAPPPPSRG…GSLPEAVTPG (451 aa)) are cytoplasmic. 4 disordered regions span residues 50–98 (PSRG…SSST), 274–330 (PPLD…KSNV), 398–426 (VRTGDDAETASNGPRSTVSADIGGSARHE), and 449–494 (VASR…VTPG). The segment covering 54 to 64 (LSHRSATHRRS) has biased composition (basic residues). Polar residues-rich tracts occupy residues 65 to 76 (NSIYSNSPQEAG) and 85 to 98 (STSNVLRPVPSSST). In terms of domain architecture, SMP-LTD spans 130 to 387 (QPESLDWFNV…EPRVQVVGLP (258 aa)). The span at 274-286 (PPLDTPSHSPSPP) shows a compositional bias: pro residues. 2 stretches are compositionally biased toward polar residues: residues 406-416 (TASNGPRSTVS) and 466-477 (RSMTRQESSGDL).

The protein belongs to the MMM1 family. Homodimer. Component of the ER-mitochondria encounter structure (ERMES) or MDM complex, composed of mmm1, mdm10, mdm12 and mdm34. A mmm1 homodimer associates with one molecule of mdm12 on each side in a pairwise head-to-tail manner, and the SMP-LTD domains of mmm1 and mdm12 generate a continuous hydrophobic tunnel for phospholipid trafficking.

It localises to the endoplasmic reticulum membrane. In terms of biological role, component of the ERMES/MDM complex, which serves as a molecular tether to connect the endoplasmic reticulum (ER) and mitochondria. Components of this complex are involved in the control of mitochondrial shape and protein biogenesis, and function in nonvesicular lipid trafficking between the ER and mitochondria. The mdm12-mmm1 subcomplex functions in the major beta-barrel assembly pathway that is responsible for biogenesis of all outer membrane beta-barrel proteins, and acts in a late step after the SAM complex. The mdm10-mdm12-mmm1 subcomplex further acts in the TOM40-specific pathway after the action of the mdm12-mmm1 complex. Essential for establishing and maintaining the structure of mitochondria and maintenance of mtDNA nucleoids. This is Maintenance of mitochondrial morphology protein 1 from Aspergillus clavatus (strain ATCC 1007 / CBS 513.65 / DSM 816 / NCTC 3887 / NRRL 1 / QM 1276 / 107).